A 202-amino-acid chain; its full sequence is Alpha-S1-casein (202 aa).

Disordered regions lie at residues 1–25 (RPKL…VLKE) and 51–84 (LKEK…VVPI). Composition is skewed to basic and acidic residues over residues 16 to 25 (QDSREKVLKE) and 51 to 63 (LKEK…KEYL). Ser18 carries the phosphoserine modification. Low complexity predominate over residues 70 to 80 (QESSSTSSSEE). Residues Ser72, Ser73, Ser74, Ser76, Ser77, and Ser78 each carry the phosphoserine modification.

It belongs to the alpha-casein family. As to expression, mammary gland specific. Secreted in milk.

Its subcellular location is the secreted. Its function is as follows. Important role in the capacity of milk to transport calcium phosphate. The chain is Alpha-S1-casein from Equus asinus (Donkey).